Here is a 1430-residue protein sequence, read N- to C-terminus: Bromodomain-containing protein homolog (1430 aa).

A C2H2-type zinc finger spans residues 23 to 49 (FACPVRGCDRSYKTIMGLQYHLMKYDH). The interval 51–111 (NPQPLTPVLT…AGGGSASGVS (61 aa)) is disordered. Residues 62–81 (SRKKARSRSGGHHSTPRPHK) are compositionally biased toward basic residues. The segment at 283–333 (DAVCCICLDGECQNTNVILFCDMCNLAVHQDCYGVPYIPEGQWLCRRCLQS) adopts a PHD-type 1 zinc-finger fold. Positions 286, 289, 303, 306, 311, 314, 327, and 330 each coordinate Zn(2+). A C2HC pre-PHD-type zinc finger spans residues 337-370 (PVNCVLCPNAGGAFKQTDHGQWAHVVCALWIPEV). The PHD-type 2 zinc-finger motif lies at 394–457 (LTCYVCKEKG…QKFAYCHAHT (64 aa)). Residues 611 to 715 (LQLNPLEAAL…DQAAPLFVQV (105 aa)) enclose the Bromo domain. The segment covering 796 to 805 (KARFAARHSS) has biased composition (basic residues). Disordered stretches follow at residues 796-887 (KARF…SSPV), 901-942 (AQAA…TTAA), 1012-1054 (ANLP…QALP), and 1076-1301 (QRDV…GQKP). A compositionally biased stretch (acidic residues) spans 842-857 (HDDDDEEEDSDEDSMG). The span at 865 to 887 (LLNSTQTPPCSPIKSLNNSSSPV) shows a compositional bias: polar residues. Low complexity-rich tracts occupy residues 922–942 (NSQSSNTQSTSGSSSSVTTAA), 1034–1043 (SSSMSPKKSP), and 1085–1107 (APSQSSSPCSSCSDFSMSGSCSD). Residues 1108 to 1120 (FDSDEASEGDADG) are compositionally biased toward acidic residues. The segment covering 1121-1137 (DPDRDGGRSRSEERDST) has biased composition (basic and acidic residues). Polar residues-rich tracts occupy residues 1151–1165 (ASLNNVQGNNGNMAI) and 1265–1278 (NTTAAGSAPLTNNN). Over residues 1281–1293 (KHSEDSASSERHN) the composition is skewed to basic and acidic residues. Residues 1305-1378 (PLQLVWAKCR…TWQWLPANKL (74 aa)) enclose the PWWP domain.

In terms of assembly, component of the Enok complex composed of at least Br140, enok, Eaf6 and Ing5. As part of the Enok complex, interacts with elg1 and the Elg1 RFC-like complex.

The protein localises to the nucleus. Scaffold subunit of the histone acetyltransferase (HAT) Enok complex which has histone H3 acetyltransferase activity. As part of the Enok complex, associates with the Elg1 RFC-like complex and down-regulates its PCNA-unloading function to promote the G1/S transition. May also play a role in maintaining the protein levels and stability of enok. This is Bromodomain-containing protein homolog from Drosophila melanogaster (Fruit fly).